A 243-amino-acid chain; its full sequence is NH(3)-dependent NAD(+) synthetase (243 aa).

Position 31–38 (31–38 (GVSGGIDS)) interacts with ATP. Asp-37 is a binding site for Mg(2+). Arg-110 is a binding site for deamido-NAD(+). Thr-130 is a binding site for ATP. Glu-135 contacts Mg(2+). The deamido-NAD(+) site is built by Lys-143 and Asp-150. The ATP site is built by Lys-159 and Ser-181. 227–228 (HK) lines the deamido-NAD(+) pocket.

This sequence belongs to the NAD synthetase family. In terms of assembly, homodimer.

The catalysed reaction is deamido-NAD(+) + NH4(+) + ATP = AMP + diphosphate + NAD(+) + H(+). Its pathway is cofactor biosynthesis; NAD(+) biosynthesis; NAD(+) from deamido-NAD(+) (ammonia route): step 1/1. Its function is as follows. Catalyzes the ATP-dependent amidation of deamido-NAD to form NAD. Uses ammonia as a nitrogen source. The polypeptide is NH(3)-dependent NAD(+) synthetase (Malacoplasma penetrans (strain HF-2) (Mycoplasma penetrans)).